A 1434-amino-acid chain; its full sequence is MRSARALLLALALRVCALDSETPSAGCTFEEDDDLNQCEYSQGEDDDFGWELVRSYMMPHLTADLPHGSYLMVNASQHAAGQRAHLLFQALSENDTHCLQFSYFMYSRDGHSPGTLSAYVRVMGGPVGSAVWNASGSHGRQWHQAELAVSLFWPSEYQVLFEAVISSERRGYLGLDDILLLNYPCSKAPHFSRLGDVEVNAGQNATFQCVAAGKAAEAERFLMQRQSGEVVPAASVKHISHRRFLATFQLDEVSKGEQDLYRCVTQSSRGSGVSNFAELIVKEPPTPIAPPQLLRAGSTYLIIQLNTNSIIGDGPIVRKEIEYRMTSGPWSEVHAVNMQTYKLWHLDPDTEYEISVLLTRPGEGGTGKPGPPLISRTKCAEPMRAPKGLAFSEIQSRQLTLQWEPLGYNLTRCHTYSVSLCYRYLVGSGLNQTFRECAKMERNANRYTIKNLLPYRNIHVKLILSNPEGRKEGKEVTFQTDEDVPGGIASESLTFTPLEDMIFLKWEEPVEPNGLITQYEISYQSIESSDPAVNVPGPRRTVSKLRNETYHVFSNLHPGTTYLFSVRARTGKGFGQTALTEITTNISAPTFDYGDMPSPLGESESTITVLLRPAQGRGAPISTYQVIVEEDRPKRIKRELGGQECFPVPLTFDDAMSRGSVHYFGAELPASSLTEAKPFTVGDNQTYSGYWNPPLEPKKAYLIYFQAMSNLKGETRLNCIRIARKAACKESKRPLEVSQHSEEMGLILGICAGGLVVLIILLGAIIVVIRKGKPVNMTKATINYRHEKTHMMSAIDRSFTDQSTLQEDERLGLSFMDTHNYSNRGDQRSSVVNESSSLLGGSPRRQCGRKGSPYHTGQLHPAVRVADLLQHINQMKTAEGYGFKQEYESFFEGWDASKKKDKTKGRQDHVSTYDRHRVKLHPLLGDPNSDYINANYIDGYHRSNHFIATQGPKQEMVYDFWRMVWQEHCSSIVMITKLVEVGRVKCSKYWPDDSEMYGDIKITLVKSEMLAEYAVRTFALERRGYSARHEVKQFHFTSWPEHGVPYHATGLLAFIRRVKASTPPDAGPIVIHCSAGTGRTGCYIVLDVMLDMAECEGVVDIYNCVKTLCSRRINMIQTEEQYIFIHDAILEACLCGETSIPASEFKPTYKEMVRIEPQSNSSQLREEFQTLNSVTPHLDVEECSIALLPRNRERNRSMDVLPPDRCLPFLISVDGDSNNYINAALTDSYTKSAAFIVTLHPLQNTTTDFWRLVYDYGCTSIVMLNQLNQSNSAWPCLQYWPEPGLQHYGPMEVEYVSGAADEDIVSRLFRVQNITRLQEGHLMVRHFQYLRWSAYRDTPDSKKSFLHLLAQVERWQKESGDGRTVVHCLNGGGRSGTYCASTMILEMIKCHNMADIFYAAKTLRNYKPNMVETLEQYHFCYDIALEYLESLETR.

The signal sequence occupies residues 1 to 17; the sequence is MRSARALLLALALRVCA. Topologically, residues 18–748 are extracellular; that stretch reads LDSETPSAGC…QHSEEMGLIL (731 aa). One can recognise an MAM domain in the interval 25 to 187; sequence AGCTFEEDDD…ILLLNYPCSK (163 aa). Asparagine 74 carries an N-linked (GlcNAc...) asparagine glycan. Positions 189 to 274 constitute an Ig-like C2-type domain; the sequence is PHFSRLGDVE…TQSSRGSGVS (86 aa). A disulfide bond links cysteine 209 and cysteine 263. Fibronectin type-III domains lie at 287–382, 385–483, 484–590, and 597–677; these read PIAP…CAEP, APKG…TDED, VPGG…SAPT, and PSPL…TEAK. Asparagine 409 carries an N-linked (GlcNAc...) asparagine glycan. N-linked (GlcNAc...) asparagine glycosylation occurs at asparagine 684. Residues 749 to 769 form a helical membrane-spanning segment; it reads GICAGGLVVLIILLGAIIVVI. At 770–1434 the chain is on the cytoplasmic side; that stretch reads RKGKPVNMTK…LEYLESLETR (665 aa). Residues 824 to 839 show a composition bias toward polar residues; sequence RGDQRSSVVNESSSLL. The tract at residues 824–851 is disordered; the sequence is RGDQRSSVVNESSSLLGGSPRRQCGRKG. Tyrosine-protein phosphatase domains follow at residues 876-1132 and 1164-1427; these read KTAE…ILEA and LREE…ALEY. Substrate-binding positions include glutamate 1041, 1073-1079, and glutamine 1117; that span reads CSAGTGR. Catalysis depends on cysteine 1073, which acts as the Phosphocysteine intermediate. Cysteine 1368 serves as the catalytic Phosphocysteine intermediate.

This sequence belongs to the protein-tyrosine phosphatase family. Receptor class 2B subfamily.

It is found in the cell junction. Its subcellular location is the cell membrane. It carries out the reaction O-phospho-L-tyrosyl-[protein] + H2O = L-tyrosyl-[protein] + phosphate. In terms of biological role, tyrosine-protein phosphatase which dephosphorylates CTNNB1. May function in cell proliferation and migration and play a role in the maintenance of epithelial integrity. The protein is Receptor-type tyrosine-protein phosphatase U (PTPRU) of Gallus gallus (Chicken).